The following is a 111-amino-acid chain: Ribonuclease P protein component (111 aa).

The protein belongs to the RnpA family. As to quaternary structure, consists of a catalytic RNA component (M1 or rnpB) and a protein subunit.

The enzyme catalyses Endonucleolytic cleavage of RNA, removing 5'-extranucleotides from tRNA precursor.. RNaseP catalyzes the removal of the 5'-leader sequence from pre-tRNA to produce the mature 5'-terminus. It can also cleave other RNA substrates such as 4.5S RNA. The protein component plays an auxiliary but essential role in vivo by binding to the 5'-leader sequence and broadening the substrate specificity of the ribozyme. This Streptococcus thermophilus (strain CNRZ 1066) protein is Ribonuclease P protein component.